Consider the following 616-residue polypeptide: Chaperone protein HscA (616 aa).

Belongs to the heat shock protein 70 family.

Its function is as follows. Chaperone involved in the maturation of iron-sulfur cluster-containing proteins. Has a low intrinsic ATPase activity which is markedly stimulated by HscB. Involved in the maturation of IscU. The polypeptide is Chaperone protein HscA (Escherichia coli O45:K1 (strain S88 / ExPEC)).